We begin with the raw amino-acid sequence, 485 residues long: Pre-glycoprotein polyprotein GP complex (485 aa).

The N-myristoyl glycine; by host moiety is linked to residue Gly2. The Extracellular segment spans residues 2–17 (GQFISFMQEIPTFLQE). A helical membrane pass occupies residues 18 to 33 (ALNIALVAVSLIAIIK). The Cytoplasmic portion of the chain corresponds to 34 to 58 (GVVNLYKSGLFQFFVFLALAGRSCT). Cys57 provides a ligand contact to Zn(2+). Topologically, residues 59–424 (EEAFKIGLHT…QGKTPLTLVD (366 aa)) are extracellular. Intrachain disulfides connect Cys92/Cys226, Cys135/Cys164, Cys207/Cys213, Cys271/Cys284, Cys293/Cys302, and Cys356/Cys377. Residues Asn95 and Asn105 are each glycosylated (N-linked (GlcNAc...) asparagine; by host). Residues Asn166 and Asn178 are each glycosylated (N-linked (GlcNAc...) asparagine; by host). The fusion stretch occupies residues 250-286 (LKAFFSWSLTDSSGKDTPGGYCLEEWMLVAAKMKCFG). The tract at residues 287–355 (NTAVAKCNLN…KIRELMSVPY (69 aa)) is HR1. Asn357, Asn365, Asn382, and Asn387 each carry an N-linked (GlcNAc...) asparagine; by host glycan. Residues 360–423 (KFWYVNHTLS…RQGKTPLTLV (64 aa)) form an HR2 region. A helical transmembrane segment spans residues 425–445 (ICFWSTVFFTASLFLHLVGIP). Over 446 to 485 (THRHIRGEACPLPHRLNSLGGCRCGKYPNLKKPTVWRRGH) the chain is Cytoplasmic. Zn(2+) contacts are provided by His447, His449, Cys455, His459, Cys467, Cys469, and His485.

This sequence belongs to the arenaviridae GPC protein family. As to quaternary structure, interacts with glycoprotein G2. Part of the GP complex (GP-C) together with glycoprotein G1 and glycoprotein G2. The GP-complex interacts with protein Z, which interacts with ribonucleocapsid; these interactions may induce virion budding. In terms of assembly, homotrimer; disulfide-linked. In pre-fusion state, G1 homotrimers bind G2 homotrimers via ionic interactions. Part of the GP complex (GP-C) together with glycoprotein G2 and the stable signal peptide. Interacts with host TFRC. The GP-complex interacts with protein Z, which interacts with ribonucleocapsid; these interactions may induce virion budding. Homotrimer. Interacts with the stable signal peptide. In pre-fusion state, G2 homotrimers bind G1 homotrimers via ionic interactions. Part of the GP complex (GP-C) together with glycoprotein G1 and the stable signal peptide. Acidification in the endosome triggers rearrangements, which ultimately leads to a 6 helix bundle formed by the two heptad repeat domains (HR1 and HR2) in post-fusion state. The GP-complex interacts with protein Z, which interacts with ribonucleocapsid; these interactions may induce virion budding. Specific enzymatic cleavages in vivo yield mature proteins. GP-C polyprotein is cleaved in the endoplasmic reticulum by the host protease MBTPS1. Only cleaved glycoprotein is incorporated into virions. Post-translationally, the SSP remains stably associated with the GP complex following cleavage by signal peptidase and plays crucial roles in the trafficking of GP through the secretory pathway. In terms of processing, myristoylation is necessary for GP2-mediated fusion activity.

The protein resides in the virion membrane. Its subcellular location is the host endoplasmic reticulum membrane. The protein localises to the host Golgi apparatus membrane. It localises to the host cell membrane. In terms of biological role, functions as a cleaved signal peptide that is retained as the third component of the GP complex (GP-C). Helps to stabilize the spike complex in its native conformation. The SSP is required for efficient glycoprotein expression, post-translational maturation cleavage of G1 and G2, glycoprotein transport to the cell surface plasma membrane, formation of infectious virus particles, and acid pH-dependent glycoprotein-mediated cell fusion. Functionally, forms the virion spikes together with glycoprotein G2. The glycoprotein spike trimers are connected to the underlying matrix. Mediates virus attachment to host TFRC. This attachment induces virion internalization predominantly through clathrin-mediated endocytosis. Forms the virion spikes together with glycoprotein G1. The glycoprotein spike trimers are connected to the underlying matrix. Class I viral fusion protein that directs fusion of viral and host endosomal membranes, leading to delivery of the nucleocapsid into the cytoplasm. Membrane fusion is mediated by irreversible conformational changes induced by acidification. This is Pre-glycoprotein polyprotein GP complex from Junin mammarenavirus (JUNV).